The chain runs to 203 residues: Probable cytochrome c oxidase subunit 3 (203 aa).

5 consecutive transmembrane segments (helical) span residues 30–50 (IVWL…YFSA), 71–91 (VPVT…VFAA), 96–116 (IFGL…FVLG), 143–163 (ATGF…FLLV), and 179–199 (IVVS…FTVI).

This sequence belongs to the cytochrome c oxidase subunit 3 family.

The protein resides in the cell membrane. It carries out the reaction 4 Fe(II)-[cytochrome c] + O2 + 8 H(+)(in) = 4 Fe(III)-[cytochrome c] + 2 H2O + 4 H(+)(out). This Mycobacterium bovis (strain ATCC BAA-935 / AF2122/97) protein is Probable cytochrome c oxidase subunit 3 (ctaE).